The following is a 310-amino-acid chain: Tryptophan 2,3-dioxygenase (310 aa).

A disordered region spans residues 1-39 (MQPPGNDAPAGCPFSGARAQGTQAAHEAPHVPGDAGEQA). Substrate contacts are provided by residues 79-83 (FIIQH), Y141, and R145. H268 contacts heme. T282 contacts substrate.

The protein belongs to the tryptophan 2,3-dioxygenase family. Homotetramer. Requires heme as cofactor.

It carries out the reaction L-tryptophan + O2 = N-formyl-L-kynurenine. The protein operates within amino-acid degradation; L-tryptophan degradation via kynurenine pathway; L-kynurenine from L-tryptophan: step 1/2. In terms of biological role, heme-dependent dioxygenase that catalyzes the oxidative cleavage of the L-tryptophan (L-Trp) pyrrole ring and converts L-tryptophan to N-formyl-L-kynurenine. Catalyzes the oxidative cleavage of the indole moiety. This Burkholderia multivorans (strain ATCC 17616 / 249) protein is Tryptophan 2,3-dioxygenase.